The sequence spans 337 residues: Glyceraldehyde-3-phosphate dehydrogenase, cytosolic (337 aa).

Residues 13-14 (RI), Asp-35, and Arg-82 each bind NAD(+). Residues 153-155 (SCT), Thr-184, 213-214 (TG), and Arg-236 each bind D-glyceraldehyde 3-phosphate. The Nucleophile role is filled by Cys-154. NAD(+) is bound at residue Asn-318.

This sequence belongs to the glyceraldehyde-3-phosphate dehydrogenase family. In terms of assembly, homotetramer.

It is found in the cytoplasm. The enzyme catalyses D-glyceraldehyde 3-phosphate + phosphate + NAD(+) = (2R)-3-phospho-glyceroyl phosphate + NADH + H(+). It participates in carbohydrate degradation; glycolysis; pyruvate from D-glyceraldehyde 3-phosphate: step 1/5. Functionally, key enzyme in glycolysis that catalyzes the first step of the pathway by converting D-glyceraldehyde 3-phosphate (G3P) into 3-phospho-D-glyceroyl phosphate. Essential for the maintenance of cellular ATP levels and carbohydrate metabolism. The chain is Glyceraldehyde-3-phosphate dehydrogenase, cytosolic (GAPC) from Antirrhinum majus (Garden snapdragon).